Consider the following 500-residue polypeptide: MSDFYWLTIIVVLPISAGSLIALLPHRGNKVVRWYTICICLFELLLTTYVFCYHFQLDDPLIQLEEDFNWINLFDFHWRLGIDGLSIGPILLTGFITTLATSAARPVTRNSRLFHFLMLAMYSGQIGLFSSRDLLLFFIMWELELIPVYLLLSMWGGKKRLYSATKFILYTAGGSIFLLMGVLGMGLYGSNEPKLNFETLANQSYPVALEIIFYFGFLIAYAVKSPIIPLHTWLPDTHGEAHYSTCMLLAGILLKMGAYGLVRINMELLPHAHSIFSPWLMIVGTIQIIYAASTSLGQRNLKKRIAYSSVSHMGFIIIGISSITDAGLNGAILQIISHGFIGAALFFLAGTSYDRIRLRYLNEMGGIAILMPRIFTMFSSFSMASLALPGMSGFVAELVIFLGIITSPKYLVVSKILITFVMAIGMILTPIYSLSMSRQMFYGYRLFNVPNSYFVDSGPREIFILICILLPIIGIGIYPDFVLSLSVDKVEAILSNYFHG.

The next 14 membrane-spanning stretches (helical) occupy residues 4 to 24 (FYWL…IALL), 37 to 57 (ICIC…HFQL), 80 to 100 (LGID…TTLA), 113 to 130 (LFHF…GLFS), 134 to 154 (LLLF…LLSM), 167 to 187 (FILY…GMGL), 208 to 228 (ALEI…SPII), 242 to 262 (HYST…YGLV), 272 to 292 (AHSI…IYAA), 305 to 325 (IAYS…SITD), 330 to 350 (GAIL…FLAG), 386 to 406 (LALP…GIIT), 416 to 436 (ILIT…SLSM), and 462 to 482 (IFIL…PDFV).

The protein belongs to the complex I subunit 4 family.

The protein localises to the plastid. It localises to the chloroplast thylakoid membrane. It carries out the reaction a plastoquinone + NADH + (n+1) H(+)(in) = a plastoquinol + NAD(+) + n H(+)(out). It catalyses the reaction a plastoquinone + NADPH + (n+1) H(+)(in) = a plastoquinol + NADP(+) + n H(+)(out). The protein is NAD(P)H-quinone oxidoreductase chain 4, chloroplastic of Nuphar advena (Common spatterdock).